A 444-amino-acid chain; its full sequence is DNA primase DnaG (444 aa).

Residues 186–260 (DSIIVVEGRN…EVDFVARAPP (75 aa)) form the Toprim domain. The Mg(2+) site is built by E192, D234, and D236.

Belongs to the archaeal DnaG primase family. Forms a ternary complex with MCM helicase and DNA. Component of the archaeal exosome complex. Mg(2+) serves as cofactor.

It catalyses the reaction ssDNA + n NTP = ssDNA/pppN(pN)n-1 hybrid + (n-1) diphosphate.. RNA polymerase that catalyzes the synthesis of short RNA molecules used as primers for DNA polymerase during DNA replication. Also part of the exosome, which is a complex involved in RNA degradation. Acts as a poly(A)-binding protein that enhances the interaction between heteromeric, adenine-rich transcripts and the exosome. The polypeptide is DNA primase DnaG (Thermoplasma volcanium (strain ATCC 51530 / DSM 4299 / JCM 9571 / NBRC 15438 / GSS1)).